Reading from the N-terminus, the 341-residue chain is Methionine import ATP-binding protein MetN 1 (341 aa).

The region spanning 2 to 241 (IKLNQIVKRY…PQHEVTKRFV (240 aa)) is the ABC transporter domain. ATP is bound at residue 38–45 (GFSGAGKS).

Belongs to the ABC transporter superfamily. Methionine importer (TC 3.A.1.24) family. The complex is composed of two ATP-binding proteins (MetN), two transmembrane proteins (MetI) and a solute-binding protein (MetQ).

The protein localises to the cell membrane. It carries out the reaction L-methionine(out) + ATP + H2O = L-methionine(in) + ADP + phosphate + H(+). The catalysed reaction is D-methionine(out) + ATP + H2O = D-methionine(in) + ADP + phosphate + H(+). In terms of biological role, part of the ABC transporter complex MetNIQ involved in methionine import. Responsible for energy coupling to the transport system. The sequence is that of Methionine import ATP-binding protein MetN 1 from Staphylococcus epidermidis (strain ATCC 12228 / FDA PCI 1200).